The following is a 372-amino-acid chain: Protein phosphatase 1 regulatory subunit 42 (372 aa).

LRR repeat units follow at residues 30-51, 52-71, 72-93, 94-115, 116-137, 146-167, and 168-189; these read RITH…TMCR, NLTV…NLGS, NLTH…SGLK, RLEK…EGLR, ELRE…LFDP, SLSV…AVLE, and NLTQ…EFVL. Residues 203 to 241 enclose the LRRCT domain; sequence NPVCLKPKYREKVTIISKTLEILDGKEIKEMARQFLLNW.

The protein resides in the cytoplasm. It is found in the cytoskeleton. The protein localises to the microtubule organizing center. Its subcellular location is the centrosome. May regulate phosphatase activity of protein phosphatase 1 (PP1) complexes. The polypeptide is Protein phosphatase 1 regulatory subunit 42 (ppp1r42) (Xenopus laevis (African clawed frog)).